Reading from the N-terminus, the 200-residue chain is Holliday junction branch migration complex subunit RuvA (200 aa).

The interval 1–63 (MYAYVKGKLT…EDAQLLYGFS (63 aa)) is domain I. The domain II stretch occupies residues 64 to 142 (SEEEKDMFLS…ITEEDSDSLL (79 aa)). Residues 143-149 (QVDATST) are flexible linker. Residues 150–200 (EQDQFVQEAMLALEALGYSKRELAKVEKTLNKNKYDSVDEAVKAGLQLVVS) form a domain III region.

The protein belongs to the RuvA family. As to quaternary structure, homotetramer. Forms an RuvA(8)-RuvB(12)-Holliday junction (HJ) complex. HJ DNA is sandwiched between 2 RuvA tetramers; dsDNA enters through RuvA and exits via RuvB. An RuvB hexamer assembles on each DNA strand where it exits the tetramer. Each RuvB hexamer is contacted by two RuvA subunits (via domain III) on 2 adjacent RuvB subunits; this complex drives branch migration. In the full resolvosome a probable DNA-RuvA(4)-RuvB(12)-RuvC(2) complex forms which resolves the HJ.

The protein localises to the cytoplasm. Functionally, the RuvA-RuvB-RuvC complex processes Holliday junction (HJ) DNA during genetic recombination and DNA repair, while the RuvA-RuvB complex plays an important role in the rescue of blocked DNA replication forks via replication fork reversal (RFR). RuvA specifically binds to HJ cruciform DNA, conferring on it an open structure. The RuvB hexamer acts as an ATP-dependent pump, pulling dsDNA into and through the RuvAB complex. HJ branch migration allows RuvC to scan DNA until it finds its consensus sequence, where it cleaves and resolves the cruciform DNA. The sequence is that of Holliday junction branch migration complex subunit RuvA from Staphylococcus aureus (strain MRSA252).